A 461-amino-acid chain; its full sequence is Phosphomethylpyrimidine synthase (461 aa).

Substrate-binding positions include Asn-80, Met-109, Tyr-138, His-173, 193 to 195 (SRG), 234 to 237 (DGLR), and Glu-273. His-277 contributes to the Zn(2+) binding site. Tyr-300 is a substrate binding site. His-341 contributes to the Zn(2+) binding site. [4Fe-4S] cluster contacts are provided by Cys-421, Cys-424, and Cys-429.

The protein belongs to the ThiC family. [4Fe-4S] cluster serves as cofactor.

The catalysed reaction is 5-amino-1-(5-phospho-beta-D-ribosyl)imidazole + S-adenosyl-L-methionine = 4-amino-2-methyl-5-(phosphooxymethyl)pyrimidine + CO + 5'-deoxyadenosine + formate + L-methionine + 3 H(+). Its pathway is cofactor biosynthesis; thiamine diphosphate biosynthesis. In terms of biological role, catalyzes the synthesis of the hydroxymethylpyrimidine phosphate (HMP-P) moiety of thiamine from aminoimidazole ribotide (AIR) in a radical S-adenosyl-L-methionine (SAM)-dependent reaction. The chain is Phosphomethylpyrimidine synthase from Solibacter usitatus (strain Ellin6076).